The chain runs to 123 residues: Putative acidic leucine-rich nuclear phosphoprotein 32 family member C (123 aa).

LRR repeat units follow at residues E43–N64, K65–C87, N89–K110, and N114–C123.

Belongs to the ANP32 family.

The polypeptide is Putative acidic leucine-rich nuclear phosphoprotein 32 family member C (Anp32c) (Mus musculus (Mouse)).